We begin with the raw amino-acid sequence, 461 residues long: uncharacterized protein (461 aa).

LRR repeat units follow at residues 119–140 (NVKK…EKMS), 141–162 (LLEV…QHCK), and 163–184 (NLKE…EYLK). In terms of domain architecture, LRRCT spans 197-237 (NPCVGEGGQEYRRKVIRVLPNLTKLDDKPVTTTDHQEAIED).

This is an uncharacterized protein from Caenorhabditis elegans.